The primary structure comprises 200 residues: Lipopolysaccharide core heptose(II)-phosphate phosphatase (200 aa).

Positions 1-25 (MLAFCRSSLKSKKYFIILLALAAIA) are cleaved as a signal peptide.

Belongs to the phosphoglycerate mutase family. Ais subfamily.

Its subcellular location is the periplasm. It participates in bacterial outer membrane biogenesis; lipopolysaccharide metabolism. Catalyzes the dephosphorylation of heptose(II) of the outer membrane lipopolysaccharide core. The sequence is that of Lipopolysaccharide core heptose(II)-phosphate phosphatase from Escherichia coli O157:H7 (strain EC4115 / EHEC).